The following is a 343-amino-acid chain: Ribosomal RNA small subunit methyltransferase C (343 aa).

Belongs to the methyltransferase superfamily. RsmC family. Monomer.

Its subcellular location is the cytoplasm. It carries out the reaction guanosine(1207) in 16S rRNA + S-adenosyl-L-methionine = N(2)-methylguanosine(1207) in 16S rRNA + S-adenosyl-L-homocysteine + H(+). In terms of biological role, specifically methylates the guanine in position 1207 of 16S rRNA in the 30S particle. The protein is Ribosomal RNA small subunit methyltransferase C of Escherichia coli (strain 55989 / EAEC).